A 1122-amino-acid chain; its full sequence is Histone deacetylase 5 (1122 aa).

The tract at residues methionine 1–arginine 22 is disordered. Residue lysine 35 forms a Glycyl lysine isopeptide (Lys-Gly) (interchain with G-Cter in SUMO2) linkage. The tract at residues lysine 196–leucine 281 is disordered. The segment covering aspartate 247–alanine 258 has biased composition (basic and acidic residues). At serine 259 the chain carries Phosphoserine; by AMPK, CaMK1, SIK1 and PKD/PRKD1. The span at lysine 272–leucine 281 shows a compositional bias: basic and acidic residues. Threonine 292 is modified (phosphothreonine; by PKC). Disordered regions lie at residues glycine 302–threonine 343 and methionine 481–serine 504. Residues asparagine 312–serine 327 are compositionally biased toward low complexity. The segment covering threonine 328–asparagine 340 has biased composition (polar residues). Residues serine 494 to serine 504 show a composition bias toward low complexity. The residue at position 498 (serine 498) is a Phosphoserine; by AMPK, CaMK1, SIK1 and PKD/PRKD1. Lysine 533 is subject to N6-acetyllysine. The disordered stretch occupies residues threonine 536–glycine 625. Residues serine 581–glutamate 621 are compositionally biased toward acidic residues. A phosphoserine mark is found at serine 611 and serine 661. Positions glycine 684 to glutamine 1028 are histone deacetylase. The Zn(2+) site is built by cysteine 696, cysteine 698, histidine 704, and cysteine 781. Histidine 833 is an active-site residue. The Nuclear export signal signature appears at glutamate 1081–leucine 1122. Residues glutamate 1097–leucine 1122 are disordered. Basic and acidic residues predominate over residues alanine 1104–glutamate 1113. Phosphoserine is present on serine 1108.

Belongs to the histone deacetylase family. HD type 2 subfamily. As to quaternary structure, interacts with AHRR, BAHD1, BCOR, HDAC7, HDAC9, CTBP1, MEF2C, NCOR2, NRIP1, PHB2 and a 14-3-3 chaperone protein. Interacts with BCL6, DDIT3/CHOP, GRK5, KDM5B and MYOCD. Interacts with EP300 in the presence of TFAP2C. Interacts with ANKRA2. Interacts with CUL7 (as part of the 3M complex); negatively regulated by ANKRA2. Interacts with ZBTB7B; the interaction allows the recruitment of HDAC4 on CD8 loci for deacetylation and possible inhibition of CD8 genes expression. Interacts with RARA. Post-translationally, phosphorylated by AMPK, CaMK1, SIK1 and PRKD1 at Ser-259 and Ser-498. The phosphorylation is required for the export to the cytoplasm and inhibition. Phosphorylated by the PKC kinases PKN1 and PKN2, impairing nuclear import. Phosphorylated by GRK5, leading to nuclear export of HDAC5 and allowing MEF2-mediated transcription. Ubiquitinated. Polyubiquitination however does not lead to its degradation.

The protein localises to the nucleus. It is found in the cytoplasm. The enzyme catalyses N(6)-acetyl-L-lysyl-[histone] + H2O = L-lysyl-[histone] + acetate. Its function is as follows. Responsible for the deacetylation of lysine residues on the N-terminal part of the core histones (H2A, H2B, H3 and H4). Histone deacetylation gives a tag for epigenetic repression and plays an important role in transcriptional regulation, cell cycle progression and developmental events. Histone deacetylases act via the formation of large multiprotein complexes. Involved in muscle maturation by repressing transcription of myocyte enhancer MEF2C. During muscle differentiation, it shuttles into the cytoplasm, allowing the expression of myocyte enhancer factors. Serves as a corepressor of RARA and causes its deacetylation. In association with RARA, plays a role in the repression of microRNA-10a and thereby in the inflammatory response. This is Histone deacetylase 5 (HDAC5) from Pongo abelii (Sumatran orangutan).